A 184-amino-acid chain; its full sequence is Glutathione-regulated potassium-efflux system ancillary protein KefG (184 aa).

This sequence belongs to the NAD(P)H dehydrogenase (quinone) family. KefG subfamily. As to quaternary structure, interacts with KefB.

Its subcellular location is the cell inner membrane. The catalysed reaction is a quinone + NADH + H(+) = a quinol + NAD(+). The enzyme catalyses a quinone + NADPH + H(+) = a quinol + NADP(+). Functionally, regulatory subunit of a potassium efflux system that confers protection against electrophiles. Required for full activity of KefB. This is Glutathione-regulated potassium-efflux system ancillary protein KefG from Cronobacter sakazakii (strain ATCC BAA-894) (Enterobacter sakazakii).